We begin with the raw amino-acid sequence, 509 residues long: Maturase K (509 aa).

The protein belongs to the intron maturase 2 family. MatK subfamily.

It localises to the plastid. The protein localises to the chloroplast. In terms of biological role, usually encoded in the trnK tRNA gene intron. Probably assists in splicing its own and other chloroplast group II introns. The protein is Maturase K of Arpophyllum giganteum (Hyacinth orchid).